We begin with the raw amino-acid sequence, 435 residues long: UDP-N-acetylmuramate--L-alanine ligase (435 aa).

108–114 lines the ATP pocket; that stretch reads GSHGKTS.

The protein belongs to the MurCDEF family.

Its subcellular location is the cytoplasm. The enzyme catalyses UDP-N-acetyl-alpha-D-muramate + L-alanine + ATP = UDP-N-acetyl-alpha-D-muramoyl-L-alanine + ADP + phosphate + H(+). It participates in cell wall biogenesis; peptidoglycan biosynthesis. Functionally, cell wall formation. This chain is UDP-N-acetylmuramate--L-alanine ligase, found in Exiguobacterium sp. (strain ATCC BAA-1283 / AT1b).